A 285-amino-acid polypeptide reads, in one-letter code: Urease accessory protein UreD (285 aa).

The protein belongs to the UreD family. In terms of assembly, ureD, UreF and UreG form a complex that acts as a GTP-hydrolysis-dependent molecular chaperone, activating the urease apoprotein by helping to assemble the nickel containing metallocenter of UreC. The UreE protein probably delivers the nickel.

It is found in the cytoplasm. Functionally, required for maturation of urease via the functional incorporation of the urease nickel metallocenter. The sequence is that of Urease accessory protein UreD from Cenarchaeum symbiosum (strain A).